We begin with the raw amino-acid sequence, 595 residues long: Aspartate--tRNA ligase (595 aa).

Position 173 (E173) interacts with L-aspartate. An aspartate region spans residues 197–200 (QLFK). R219 lines the L-aspartate pocket. ATP contacts are provided by residues 219–221 (RDE) and Q228. H449 contributes to the L-aspartate binding site. E483 contributes to the ATP binding site. Residue R490 participates in L-aspartate binding. Residue 535–538 (GLDR) coordinates ATP.

Belongs to the class-II aminoacyl-tRNA synthetase family. Type 1 subfamily. Homodimer.

It is found in the cytoplasm. It carries out the reaction tRNA(Asp) + L-aspartate + ATP = L-aspartyl-tRNA(Asp) + AMP + diphosphate. In terms of biological role, catalyzes the attachment of L-aspartate to tRNA(Asp) in a two-step reaction: L-aspartate is first activated by ATP to form Asp-AMP and then transferred to the acceptor end of tRNA(Asp). The protein is Aspartate--tRNA ligase of Shewanella sediminis (strain HAW-EB3).